The following is a 35-amino-acid chain: Beta-amanitin proprotein (35 aa).

A propeptide spanning residues 1–10 (MSDINATRLP) is cleaved from the precursor. Residues 11–18 (IWGIGCDP) constitute a cross-link (cyclopeptide (Ile-Pro)). Residues 12–16 (WGIGC) constitute a cross-link (2'-cysteinyl-6'-hydroxytryptophan sulfoxide (Trp-Cys)). A propeptide spanning residues 19–35 (CVGDDVTALLTRGEALC) is cleaved from the precursor.

It belongs to the MSDIN fungal toxin family. Post-translationally, processed by the macrocyclase-peptidase enzyme POPB to yield a toxic cyclic octapeptide. POPB first removes 10 residues from the N-terminus. Conformational trapping of the remaining peptide forces the enzyme to release this intermediate rather than proceed to macrocyclization. The enzyme rebinds the remaining peptide in a different conformation and catalyzes macrocyclization of the N-terminal 8 residues. Expressed in basidiocarps.

In terms of biological role, toxin belonging to the bicyclic octapeptides amatoxins that acts by binding non-competitively to RNA polymerase II and greatly slowing the elongation of transcripts from target promoters. The sequence is that of Beta-amanitin proprotein from Amanita exitialis (Guangzhou destroying angel).